A 124-amino-acid chain; its full sequence is Small ribosomal subunit protein uS12 (124 aa).

D89 is modified (3-methylthioaspartic acid).

It belongs to the universal ribosomal protein uS12 family. In terms of assembly, part of the 30S ribosomal subunit. Contacts proteins S8 and S17. May interact with IF1 in the 30S initiation complex.

Its function is as follows. With S4 and S5 plays an important role in translational accuracy. In terms of biological role, interacts with and stabilizes bases of the 16S rRNA that are involved in tRNA selection in the A site and with the mRNA backbone. Located at the interface of the 30S and 50S subunits, it traverses the body of the 30S subunit contacting proteins on the other side and probably holding the rRNA structure together. The combined cluster of proteins S8, S12 and S17 appears to hold together the shoulder and platform of the 30S subunit. This chain is Small ribosomal subunit protein uS12, found in Aliivibrio fischeri (strain ATCC 700601 / ES114) (Vibrio fischeri).